The sequence spans 419 residues: Putative L-glutamine:3-amino-2,3-dideoxy-scyllo-inosose aminotransferase (419 aa).

At Lys-199 the chain carries N6-(pyridoxal phosphate)lysine.

It belongs to the DegT/DnrJ/EryC1 family. L-glutamine:2-deoxy-scyllo-inosose/scyllo-inosose aminotransferase subfamily. Pyridoxal 5'-phosphate is required as a cofactor.

The catalysed reaction is 3-amino-2,3-dideoxy-scyllo-inosose + L-glutamine = 2-deoxystreptamine + 2-oxoglutaramate. It participates in metabolic intermediate biosynthesis; 2-deoxystreptamine biosynthesis; 2-deoxystreptamine from D-glucose 6-phosphate: step 4/4. The protein operates within antibiotic biosynthesis; kanamycin biosynthesis. Functionally, catalyzes the transamination of 3-amino-2,3-dideoxy-scyllo-inosose (amino-DOI) into 2-deoxystreptamine (DOS). This chain is Putative L-glutamine:3-amino-2,3-dideoxy-scyllo-inosose aminotransferase (kanD), found in Streptomyces kanamyceticus.